An 86-amino-acid chain; its full sequence is Cell division protein ZapA (86 aa).

Belongs to the ZapA family. Type 2 subfamily. In terms of assembly, homodimer. Interacts with FtsZ.

It is found in the cytoplasm. Its function is as follows. Activator of cell division through the inhibition of FtsZ GTPase activity, therefore promoting FtsZ assembly into bundles of protofilaments necessary for the formation of the division Z ring. It is recruited early at mid-cell but it is not essential for cell division. The chain is Cell division protein ZapA from Oceanobacillus iheyensis (strain DSM 14371 / CIP 107618 / JCM 11309 / KCTC 3954 / HTE831).